The following is a 179-amino-acid chain: Disulfide bond formation protein B (179 aa).

Over 1-14 (MLSYFKELSLRRPA) the chain is Cytoplasmic. A helical membrane pass occupies residues 15–31 (WLLLATLACTLEVTGLY). Residues 32–49 (FQHKLGLIPCVMCIYERV) lie on the Periplasmic side of the membrane. Cys-41 and Cys-44 are disulfide-bonded. A helical membrane pass occupies residues 50–65 (ALTGLLIAGLIALIAP). At 66–72 (NFFLFRW) the chain is on the cytoplasmic side. Residues 73-90 (LALVLWGFSAFKGLSLSI) form a helical membrane-spanning segment. Residues 91 to 146 (KHYDYQANPSPWNQCEFKPQFPQTIPLDEWFPNIFAAGTVNCSEKQWQMLGWGMPE) are Periplasmic-facing. Cys-105 and Cys-132 form a disulfide bridge. A helical transmembrane segment spans residues 147 to 165 (WLIVAFSLFMLFFLIVFMS). Topologically, residues 166–179 (QFKRAKPQYRSVFR) are cytoplasmic.

It belongs to the DsbB family.

The protein localises to the cell inner membrane. Its function is as follows. Required for disulfide bond formation in some periplasmic proteins. Acts by oxidizing the DsbA protein. This chain is Disulfide bond formation protein B, found in Haemophilus ducreyi (strain 35000HP / ATCC 700724).